Here is a 606-residue protein sequence, read N- to C-terminus: NADH-ubiquinone oxidoreductase chain 5 (606 aa).

The next 16 helical transmembrane spans lie at 1–21, 43–63, 87–107, 112–132, 137–157, 171–191, 213–233, 241–261, 273–293, 301–321, 324–344, 366–386, 407–429, 457–477, 482–502, and 582–602; these read MNPF…PIMM, AFTL…EMII, VMFI…SMWY, PFIN…MILV, LFQL…LIGW, AILY…WFLT, LIGL…HPWL, TPVS…FLLI, VQTM…LCAI, IVAF…GINQ, LAFL…MCSG, MPFT…MPYL, WALL…IIFF, LLIG…PMTV, MPLY…MLAL, and GLIK…MTLF.

The protein belongs to the complex I subunit 5 family. Core subunit of respiratory chain NADH dehydrogenase (Complex I) which is composed of 45 different subunits.

Its subcellular location is the mitochondrion inner membrane. It carries out the reaction a ubiquinone + NADH + 5 H(+)(in) = a ubiquinol + NAD(+) + 4 H(+)(out). Its function is as follows. Core subunit of the mitochondrial membrane respiratory chain NADH dehydrogenase (Complex I) which catalyzes electron transfer from NADH through the respiratory chain, using ubiquinone as an electron acceptor. Essential for the catalytic activity and assembly of complex I. The protein is NADH-ubiquinone oxidoreductase chain 5 (MT-ND5) of Sus scrofa (Pig).